A 1396-amino-acid polypeptide reads, in one-letter code: ATP-binding cassette transporter pdr1 (1396 aa).

The segment at methionine 1 to proline 22 is disordered. An ABC transporter 1 domain is found at leucine 73–lysine 320. The region spanning leucine 412–phenylalanine 622 is the ABC transmembrane type-2 1 domain. 6 helical membrane passes run tyrosine 431–tyrosine 451, valine 466–phenylalanine 486, leucine 512–leucine 532, phenylalanine 543–isoleucine 563, isoleucine 572–methionine 592, and glycine 680–isoleucine 700. Residues leucine 758–glycine 1001 enclose the ABC transporter 2 domain. Glycine 794–serine 801 lines the ATP pocket. The ABC transmembrane type-2 2 domain occupies phenylalanine 1071–leucine 1286. Transmembrane regions (helical) follow at residues valine 1095 to glycine 1115, phenylalanine 1166 to phenylalanine 1186, phenylalanine 1208 to alanine 1228, phenylalanine 1245 to tryptophan 1265, and cysteine 1361 to isoleucine 1381.

This sequence belongs to the ABC transporter superfamily. ABCG family. PDR (TC 3.A.1.205) subfamily.

Its subcellular location is the endoplasmic reticulum membrane. This chain is ATP-binding cassette transporter pdr1 (pdr1), found in Schizosaccharomyces pombe (strain 972 / ATCC 24843) (Fission yeast).